Reading from the N-terminus, the 240-residue chain is Ribonuclease 3 (240 aa).

Residues 10–136 (VREFQETVGV…LIGAVYLDRG (127 aa)) enclose the RNase III domain. Position 49 (E49) interacts with Mg(2+). D53 is a catalytic residue. Mg(2+) contacts are provided by D122 and E125. The active site involves E125. The DRBM domain occupies 163 to 231 (DWKTSLQELT…AESAWKAIRA (69 aa)). The tract at residues 205 to 240 (TYGSGEGRSKKEAEQQAAESAWKAIRAATEKAKQES) is disordered. Residues 219-228 (QQAAESAWKA) show a composition bias toward low complexity.

This sequence belongs to the ribonuclease III family. Homodimer. The cofactor is Mg(2+).

It is found in the cytoplasm. The catalysed reaction is Endonucleolytic cleavage to 5'-phosphomonoester.. In terms of biological role, digests double-stranded RNA. Involved in the processing of primary rRNA transcript to yield the immediate precursors to the large and small rRNAs (23S and 16S). Processes some mRNAs, and tRNAs when they are encoded in the rRNA operon. Processes pre-crRNA and tracrRNA of type II CRISPR loci if present in the organism. The sequence is that of Ribonuclease 3 from Thermobifida fusca (strain YX).